The chain runs to 550 residues: Chaperonin GroEL (550 aa).

ATP-binding positions include 30–33 (TLGP), Lys-51, 87–91 (DGTTT), Gly-415, and Asp-496. The tract at residues 526-550 (PEDEKMPPMPPGGGMGGMGGMGGMY) is disordered. Residues 537-550 (GGGMGGMGGMGGMY) are compositionally biased toward gly residues.

The protein belongs to the chaperonin (HSP60) family. As to quaternary structure, forms a cylinder of 14 subunits composed of two heptameric rings stacked back-to-back. Interacts with the co-chaperonin GroES.

It localises to the cytoplasm. It carries out the reaction ATP + H2O + a folded polypeptide = ADP + phosphate + an unfolded polypeptide.. Functionally, together with its co-chaperonin GroES, plays an essential role in assisting protein folding. The GroEL-GroES system forms a nano-cage that allows encapsulation of the non-native substrate proteins and provides a physical environment optimized to promote and accelerate protein folding. The sequence is that of Chaperonin GroEL from Chloroherpeton thalassium (strain ATCC 35110 / GB-78).